We begin with the raw amino-acid sequence, 262 residues long: Virulence regulon transcriptional activator VirF (262 aa).

The HTH araC/xylS-type domain occupies 161–258; it reads DQIRKIVEKN…GITPKKFYLY (98 aa). 2 consecutive DNA-binding regions (H-T-H motif) follow at residues 178–199 and 225–248; these read SDISNNLNLSEIAVRKRLESEK and INDVSRLIGISSPSYFIRKFNEYY.

In terms of assembly, homodimer.

Primary regulator of plasmid-encoded virulence genes. Activates the transcription of icsA (virG) and of virB, which is an activator of the ipaABCD virulence regulon. The sequence is that of Virulence regulon transcriptional activator VirF (virF) from Shigella dysenteriae.